The chain runs to 380 residues: Cytochrome b (380 aa).

Helical transmembrane passes span 33–53 (FGSL…FLAM), 77–98 (WLIR…FIHV), 113–133 (WNIG…GYVL), and 178–198 (FFAF…VHLL). Heme b is bound by residues His-83 and His-97. His-182 and His-196 together coordinate heme b. His-201 contacts a ubiquinone. Helical transmembrane passes span 226–246 (IKDI…VLFF), 288–308 (LGGV…PLIN), 320–340 (ITQA…WIGG), and 347–367 (FTMI…MFMF).

This sequence belongs to the cytochrome b family. The cytochrome bc1 complex contains 11 subunits: 3 respiratory subunits (MT-CYB, CYC1 and UQCRFS1), 2 core proteins (UQCRC1 and UQCRC2) and 6 low-molecular weight proteins (UQCRH/QCR6, UQCRB/QCR7, UQCRQ/QCR8, UQCR10/QCR9, UQCR11/QCR10 and a cleavage product of UQCRFS1). This cytochrome bc1 complex then forms a dimer. Heme b is required as a cofactor.

The protein localises to the mitochondrion inner membrane. Its function is as follows. Component of the ubiquinol-cytochrome c reductase complex (complex III or cytochrome b-c1 complex) that is part of the mitochondrial respiratory chain. The b-c1 complex mediates electron transfer from ubiquinol to cytochrome c. Contributes to the generation of a proton gradient across the mitochondrial membrane that is then used for ATP synthesis. The polypeptide is Cytochrome b (MT-CYB) (Calomys musculinus (Drylands vesper mouse)).